Reading from the N-terminus, the 158-residue chain is Transcription elongation factor GreA (158 aa).

A coiled-coil region spans residues 14 to 76; the sequence is LDQLKDELTH…EIESILKNVK (63 aa).

The protein belongs to the GreA/GreB family.

Its function is as follows. Necessary for efficient RNA polymerase transcription elongation past template-encoded arresting sites. The arresting sites in DNA have the property of trapping a certain fraction of elongating RNA polymerases that pass through, resulting in locked ternary complexes. Cleavage of the nascent transcript by cleavage factors such as GreA or GreB allows the resumption of elongation from the new 3'terminus. GreA releases sequences of 2 to 3 nucleotides. The protein is Transcription elongation factor GreA of Acholeplasma laidlawii (strain PG-8A).